A 459-amino-acid polypeptide reads, in one-letter code: ATP synthase subunit beta (459 aa).

149–156 (GGAGVGKT) serves as a coordination point for ATP.

It belongs to the ATPase alpha/beta chains family. In terms of assembly, F-type ATPases have 2 components, CF(1) - the catalytic core - and CF(0) - the membrane proton channel. CF(1) has five subunits: alpha(3), beta(3), gamma(1), delta(1), epsilon(1). CF(0) has three main subunits: a(1), b(2) and c(9-12). The alpha and beta chains form an alternating ring which encloses part of the gamma chain. CF(1) is attached to CF(0) by a central stalk formed by the gamma and epsilon chains, while a peripheral stalk is formed by the delta and b chains.

It localises to the cell inner membrane. The enzyme catalyses ATP + H2O + 4 H(+)(in) = ADP + phosphate + 5 H(+)(out). Produces ATP from ADP in the presence of a proton gradient across the membrane. The catalytic sites are hosted primarily by the beta subunits. The protein is ATP synthase subunit beta of Pseudomonas syringae pv. syringae (strain B728a).